The primary structure comprises 112 residues: uncharacterized protein (112 aa).

Disordered regions lie at residues 1–53 and 80–112; these read MSKL…QRLK and MINQ…MLEL. Residues 8 to 22 show a composition bias toward polar residues; that stretch reads SALQKLIESQKNPNA. The span at 86–96 shows a compositional bias: basic residues; it reads ETKKRKRKQKK. Residues 101–112 show a composition bias toward acidic residues; sequence DYGVFEEDMLEL.

It is found in the nucleus. The protein localises to the nucleolus. This is an uncharacterized protein from Schizosaccharomyces pombe (strain 972 / ATCC 24843) (Fission yeast).